The primary structure comprises 248 residues: UPF0736 protein BCB4264_A1231 (248 aa).

Belongs to the UPF0736 family.

This chain is UPF0736 protein BCB4264_A1231, found in Bacillus cereus (strain B4264).